The primary structure comprises 339 residues: Ketol-acid reductoisomerase (NADP(+)) (339 aa).

Residues 1–182 (MRVYYDRDAD…GGGRSGIIET (182 aa)) form the KARI N-terminal Rossmann domain. NADP(+)-binding positions include 24-27 (YGSQ), lysine 48, serine 51, threonine 53, and 83-86 (DELQ). Histidine 108 is an active-site residue. Glycine 134 contributes to the NADP(+) binding site. The KARI C-terminal knotted domain occupies 183–328 (NFREECETDL…AKLRGMMPWI (146 aa)). Mg(2+) is bound by residues aspartate 191, glutamate 195, glutamate 227, and glutamate 231. Serine 252 lines the substrate pocket.

The protein belongs to the ketol-acid reductoisomerase family. Mg(2+) is required as a cofactor.

It catalyses the reaction (2R)-2,3-dihydroxy-3-methylbutanoate + NADP(+) = (2S)-2-acetolactate + NADPH + H(+). The enzyme catalyses (2R,3R)-2,3-dihydroxy-3-methylpentanoate + NADP(+) = (S)-2-ethyl-2-hydroxy-3-oxobutanoate + NADPH + H(+). The protein operates within amino-acid biosynthesis; L-isoleucine biosynthesis; L-isoleucine from 2-oxobutanoate: step 2/4. It functions in the pathway amino-acid biosynthesis; L-valine biosynthesis; L-valine from pyruvate: step 2/4. Its function is as follows. Involved in the biosynthesis of branched-chain amino acids (BCAA). Catalyzes an alkyl-migration followed by a ketol-acid reduction of (S)-2-acetolactate (S2AL) to yield (R)-2,3-dihydroxy-isovalerate. In the isomerase reaction, S2AL is rearranged via a Mg-dependent methyl migration to produce 3-hydroxy-3-methyl-2-ketobutyrate (HMKB). In the reductase reaction, this 2-ketoacid undergoes a metal-dependent reduction by NADPH to yield (R)-2,3-dihydroxy-isovalerate. The sequence is that of Ketol-acid reductoisomerase (NADP(+)) from Rhizobium rhizogenes (strain K84 / ATCC BAA-868) (Agrobacterium radiobacter).